Consider the following 1129-residue polypeptide: Stress response protein nst1 (1129 aa).

5 disordered regions span residues 1-136 (MAPS…HLGT), 229-307 (NQGS…ETRA), 361-413 (NIAA…EQRM), 453-879 (MEEQ…TQRD), and 903-937 (NLSQSLPGATAPGSLPGPTRASFGAPSLFPDPLAS). The span at 14–54 (ATTSDQMSTASSRPTNGTAHTSAETAYPSSMTDSKPTQSGP) shows a compositional bias: polar residues. Over residues 72–85 (SEQHMDHSNPDGHP) the composition is skewed to basic and acidic residues. Over residues 89 to 101 (SGRKKKKKAKKGR) the composition is skewed to basic residues. Polar residues-rich tracts occupy residues 103 to 122 (GSQTLGDESSTPLSTPSVSM) and 254 to 263 (GQHTRTQGQF). Acidic residues-rich tracts occupy residues 274 to 304 (TEDEEDLEEDYDDEEEDDDEPYSDDEFEDEE) and 379 to 408 (DEEDYDDEEDEEYDSQEEDDYDEDEMDTMT). A coiled-coil region spans residues 441–608 (AEQRQQKLIE…EDQKKANQET (168 aa)). Basic and acidic residues-rich tracts occupy residues 453-473 (MEEQTRTEQKNAKKAREAEKR) and 482-613 (QAKE…ETKR). The span at 626 to 673 (LQPQGSSSHLQSPHLQSASPAVPKAPTPAKARQPSQQGSHGSSPRSQQ) shows a compositional bias: low complexity. The segment covering 674-685 (ASTEPFHTSISP) has biased composition (polar residues). Low complexity predominate over residues 687–701 (SMAPSQSSGASSVAS). Residues 718–728 (TPLSPLGSVNR) show a composition bias toward polar residues. Over residues 741 to 754 (SNPPGLPGMVPRPP) the composition is skewed to pro residues. Residues 865–875 (TQQEQSDANRA) are compositionally biased toward polar residues.

Belongs to the NST1 family.

Its subcellular location is the cytoplasm. In terms of biological role, may act as a negative regulator of salt tolerance. This is Stress response protein nst1 (nst1) from Aspergillus terreus (strain NIH 2624 / FGSC A1156).